Here is a 431-residue protein sequence, read N- to C-terminus: Argininosuccinate lyase (431 aa).

It belongs to the lyase 1 family. Argininosuccinate lyase subfamily.

The protein localises to the cytoplasm. It carries out the reaction 2-(N(omega)-L-arginino)succinate = fumarate + L-arginine. It functions in the pathway amino-acid biosynthesis; L-arginine biosynthesis; L-arginine from L-ornithine and carbamoyl phosphate: step 3/3. The sequence is that of Argininosuccinate lyase from Xanthomonas campestris pv. campestris (strain ATCC 33913 / DSM 3586 / NCPPB 528 / LMG 568 / P 25).